Reading from the N-terminus, the 854-residue chain is Periodic tryptophan protein 2 homolog (854 aa).

WD repeat units lie at residues 9–52 (NLVG…TFPF), 53–93 (ENHK…LHYF), 94–132 (NFKSPVGAIEFSPNGKFFAVSLGKLIQVWRTPNSLEERE), 144–183 (GHFDDIVSISWSADSRFFISTSKDLTARLHSVDPIEGFHP), 188–227 (GHKNTVVSGFFSKDQQTIYTVSKDGALFVWKYSPLFQAGE), 252–291 (NQNSKLRCAAFHPTSNLLVVGFSSGLFGIYELPSFTMLYQ), 294–334 (ITQS…YVLK), 337–376 (SHYDALSTLQYSSDGQRIITGADDGKIKVWDMNSGFCIVT), 379–418 (QHTSAVSGLCFSKRGNVLFSSSLDGSVRAWDLIRYRNFRT), 422–464 (PSRV…ETLA), 465–504 (GHEGPVSSLSFNSSGSLLASGSWDKTVRIWDIFSRSGIVE), 507–546 (PIPSDVLSLAFHPDGKEVCVASLDGQLTFWNVQEGKQTSL), and 569–608 (SLNKTFTSICYSADGSCVLSAGTSKYVCLYDIITGVLIKK). Residue threonine 640 is modified to Phosphothreonine. Residue serine 645 is modified to Phosphoserine. The WD 14 repeat unit spans residues 668 to 709 (TRPEIICHGVQFSPSGGAFAAATTEGLMIYSLYNDFLFDPIN).

This sequence belongs to the WD repeat PWP2 family.

This chain is Periodic tryptophan protein 2 homolog, found in Schizosaccharomyces pombe (strain 972 / ATCC 24843) (Fission yeast).